A 360-amino-acid polypeptide reads, in one-letter code: Mannonate dehydratase (360 aa).

The protein belongs to the mannonate dehydratase family. The cofactor is Fe(2+). It depends on Mn(2+) as a cofactor.

The catalysed reaction is D-mannonate = 2-dehydro-3-deoxy-D-gluconate + H2O. Its pathway is carbohydrate metabolism; pentose and glucuronate interconversion. In terms of biological role, catalyzes the dehydration of D-mannonate. The sequence is that of Mannonate dehydratase from Thermotoga sp. (strain RQ2).